The chain runs to 98 residues: Aspartyl/glutamyl-tRNA(Asn/Gln) amidotransferase subunit C (98 aa).

Positions 76–98 are disordered; sequence QVLSGAPDAEDGRFKVPAILEED.

This sequence belongs to the GatC family. As to quaternary structure, heterotrimer of A, B and C subunits.

The enzyme catalyses L-glutamyl-tRNA(Gln) + L-glutamine + ATP + H2O = L-glutaminyl-tRNA(Gln) + L-glutamate + ADP + phosphate + H(+). It catalyses the reaction L-aspartyl-tRNA(Asn) + L-glutamine + ATP + H2O = L-asparaginyl-tRNA(Asn) + L-glutamate + ADP + phosphate + 2 H(+). Its function is as follows. Allows the formation of correctly charged Asn-tRNA(Asn) or Gln-tRNA(Gln) through the transamidation of misacylated Asp-tRNA(Asn) or Glu-tRNA(Gln) in organisms which lack either or both of asparaginyl-tRNA or glutaminyl-tRNA synthetases. The reaction takes place in the presence of glutamine and ATP through an activated phospho-Asp-tRNA(Asn) or phospho-Glu-tRNA(Gln). The protein is Aspartyl/glutamyl-tRNA(Asn/Gln) amidotransferase subunit C of Renibacterium salmoninarum (strain ATCC 33209 / DSM 20767 / JCM 11484 / NBRC 15589 / NCIMB 2235).